The sequence spans 700 residues: Elongation factor G (700 aa).

A tr-type G domain is found at 8–290; the sequence is DKYRNIGISA…AVVELLPSPL (283 aa). GTP-binding positions include 17–24, 88–92, and 142–145; these read AHIDAGKT, DTPGH, and NKMD.

This sequence belongs to the TRAFAC class translation factor GTPase superfamily. Classic translation factor GTPase family. EF-G/EF-2 subfamily.

The protein resides in the cytoplasm. Its function is as follows. Catalyzes the GTP-dependent ribosomal translocation step during translation elongation. During this step, the ribosome changes from the pre-translocational (PRE) to the post-translocational (POST) state as the newly formed A-site-bound peptidyl-tRNA and P-site-bound deacylated tRNA move to the P and E sites, respectively. Catalyzes the coordinated movement of the two tRNA molecules, the mRNA and conformational changes in the ribosome. The protein is Elongation factor G of Polynucleobacter necessarius subsp. necessarius (strain STIR1).